A 474-amino-acid polypeptide reads, in one-letter code: ATP synthase subunit beta (474 aa).

Residue 151-158 participates in ATP binding; sequence GGAGVGKT.

The protein belongs to the ATPase alpha/beta chains family. F-type ATPases have 2 components, CF(1) - the catalytic core - and CF(0) - the membrane proton channel. CF(1) has five subunits: alpha(3), beta(3), gamma(1), delta(1), epsilon(1). CF(0) has four main subunits: a(1), b(1), b'(1) and c(9-12).

The protein localises to the cell inner membrane. It carries out the reaction ATP + H2O + 4 H(+)(in) = ADP + phosphate + 5 H(+)(out). Produces ATP from ADP in the presence of a proton gradient across the membrane. The catalytic sites are hosted primarily by the beta subunits. This chain is ATP synthase subunit beta, found in Roseobacter denitrificans (strain ATCC 33942 / OCh 114) (Erythrobacter sp. (strain OCh 114)).